Here is a 225-residue protein sequence, read N- to C-terminus: Biosynthetic peptidoglycan transglycosylase (225 aa).

The chain crosses the membrane as a helical span at residues 8-28 (VLLIFIGAILLIQLWIFSSLV).

Belongs to the glycosyltransferase 51 family.

The protein localises to the cell inner membrane. It catalyses the reaction [GlcNAc-(1-&gt;4)-Mur2Ac(oyl-L-Ala-gamma-D-Glu-L-Lys-D-Ala-D-Ala)](n)-di-trans,octa-cis-undecaprenyl diphosphate + beta-D-GlcNAc-(1-&gt;4)-Mur2Ac(oyl-L-Ala-gamma-D-Glu-L-Lys-D-Ala-D-Ala)-di-trans,octa-cis-undecaprenyl diphosphate = [GlcNAc-(1-&gt;4)-Mur2Ac(oyl-L-Ala-gamma-D-Glu-L-Lys-D-Ala-D-Ala)](n+1)-di-trans,octa-cis-undecaprenyl diphosphate + di-trans,octa-cis-undecaprenyl diphosphate + H(+). It functions in the pathway cell wall biogenesis; peptidoglycan biosynthesis. Functionally, peptidoglycan polymerase that catalyzes glycan chain elongation from lipid-linked precursors. This is Biosynthetic peptidoglycan transglycosylase from Acinetobacter baumannii (strain AB307-0294).